A 293-amino-acid chain; its full sequence is MDRAKQQQALLLLPVCLALTFSLTAVVSSHWCEGTRRVVKPLCQDQPGGQHCIHFKRDNSSNGRMDNNSQAVLYIWELGDDKFIQRGFHVGLWQSCEESLNGEDEKCRSFRSVVPAEEQGVLWLSIGGEVLDIVLILTSAILLGSRVSCRSPGFHWLRVDALVAIFMVLAGLLGMVAHMMYTTIFQITVNLGPEDWKPQTWDYGWSYCLAWGSFALCLAVSVSAMSRFTAARLEFTEKQQAQNGSRHSQHSFLEPEASESIWKTGAAPCPAEQAFRNVSGHLPPGAPGKVSIC.

The Cytoplasmic portion of the chain corresponds to 1 to 8 (MDRAKQQQ). The helical transmembrane segment at 9-29 (ALLLLPVCLALTFSLTAVVSS) threads the bilayer. Over 30 to 120 (HWCEGTRRVV…RSVVPAEEQG (91 aa)) the chain is Extracellular. N-linked (GlcNAc...) asparagine glycans are attached at residues asparagine 59 and asparagine 67. A helical transmembrane segment spans residues 121–141 (VLWLSIGGEVLDIVLILTSAI). The Cytoplasmic segment spans residues 142–160 (LLGSRVSCRSPGFHWLRVD). Residues 161–181 (ALVAIFMVLAGLLGMVAHMMY) form a helical membrane-spanning segment. The Extracellular portion of the chain corresponds to 182–204 (TTIFQITVNLGPEDWKPQTWDYG). A helical transmembrane segment spans residues 205-225 (WSYCLAWGSFALCLAVSVSAM). The Cytoplasmic portion of the chain corresponds to 226 to 293 (SRFTAARLEF…PGAPGKVSIC (68 aa)).

This sequence belongs to the GSG1 family.

The protein resides in the membrane. This Homo sapiens (Human) protein is Germ cell-specific gene 1-like protein 2.